The chain runs to 198 residues: Recombination protein RecR (198 aa).

The C4-type zinc finger occupies 57 to 72 (CEKCNTFTEAQICEVC). One can recognise a Toprim domain in the interval 80 to 175 (TLLCVVETPA…AVTRLARGVP (96 aa)).

This sequence belongs to the RecR family.

Its function is as follows. May play a role in DNA repair. It seems to be involved in an RecBC-independent recombinational process of DNA repair. It may act with RecF and RecO. This is Recombination protein RecR from Paraburkholderia xenovorans (strain LB400).